Reading from the N-terminus, the 338-residue chain is MTTVQEAVPNLIPTQDATPRPAPKKVEAGVKLRGADKVARIPVKIIPTDELPKKPDWIRVRIPVSPEVDRIKQLLRKHKLHSVCEEASCPNLGECFSGGTATFMIMGDICTRRCPFCDVGHGRPKPLDLDEPKNLAVAIADLRLKYVVITSVDRDDLRDGGAQHFADCIREIRALSPGVQLETLVPDYRGRMDVALEITAQEPPDVFNHNLETVPRLYKAARPGSDYDWSLDLLQKFKQLVPHVPTKSGLMLGLGETDEEVIEVMHRMREHDIDMLTLGQYLQPSRSHLPVQRFVHPDTFAWFAEEGYKMGFKNVASGPLVRSSYHADQQAHEAKIKL.

Positions 1-24 are disordered; sequence MTTVQEAVPNLIPTQDATPRPAPK. [4Fe-4S] cluster contacts are provided by cysteine 84, cysteine 89, cysteine 95, cysteine 110, cysteine 114, cysteine 117, and serine 324. The Radical SAM core domain maps to 96-313; that stretch reads FSGGTATFMI…AEEGYKMGFK (218 aa).

It belongs to the radical SAM superfamily. Lipoyl synthase family. Requires [4Fe-4S] cluster as cofactor.

The protein resides in the cytoplasm. The enzyme catalyses [[Fe-S] cluster scaffold protein carrying a second [4Fe-4S](2+) cluster] + N(6)-octanoyl-L-lysyl-[protein] + 2 oxidized [2Fe-2S]-[ferredoxin] + 2 S-adenosyl-L-methionine + 4 H(+) = [[Fe-S] cluster scaffold protein] + N(6)-[(R)-dihydrolipoyl]-L-lysyl-[protein] + 4 Fe(3+) + 2 hydrogen sulfide + 2 5'-deoxyadenosine + 2 L-methionine + 2 reduced [2Fe-2S]-[ferredoxin]. It participates in protein modification; protein lipoylation via endogenous pathway; protein N(6)-(lipoyl)lysine from octanoyl-[acyl-carrier-protein]: step 2/2. In terms of biological role, catalyzes the radical-mediated insertion of two sulfur atoms into the C-6 and C-8 positions of the octanoyl moiety bound to the lipoyl domains of lipoate-dependent enzymes, thereby converting the octanoylated domains into lipoylated derivatives. The polypeptide is Lipoyl synthase (Pseudomonas putida (strain ATCC 700007 / DSM 6899 / JCM 31910 / BCRC 17059 / LMG 24140 / F1)).